We begin with the raw amino-acid sequence, 823 residues long: Nuclear factor I family protein (823 aa).

Residues Met-1–Pro-56 are disordered. Residues Ser-10 to Ser-25 show a composition bias toward low complexity. The span at Glu-26–Glu-52 shows a compositional bias: polar residues. The segment at residues Ile-61–Tyr-253 is a DNA-binding region (CTF/NF-I). 3 disordered regions span residues Pro-364–Val-408, Ser-433–Ser-468, and Ala-777–Lys-823. Residues Pro-386–Ser-396 show a composition bias toward basic and acidic residues. Residues Ser-433–Gln-447 are compositionally biased toward polar residues. The span at Ala-777–Asn-794 shows a compositional bias: low complexity.

Belongs to the CTF/NF-I family. As to expression, expressed in muscles, neurons and intestinal cells.

The protein localises to the nucleus. In terms of biological role, probable transcription factor which recognizes and binds the palindromic sequence 5'-TTGGCANNNTGCCAA-3' present in promoters. Plays a role in locomotion, pharyngeal pumping, egg-laying, and life span. This chain is Nuclear factor I family protein, found in Caenorhabditis elegans.